We begin with the raw amino-acid sequence, 298 residues long: MFSRAGVAGLSAWTVQPQWIQVRNMATLKDITRRLKSIKNIQKITKSMKMVAAAKYARAERELKPARVYGVGSLALYEKADIKTPEDKKKHLIIGVSSDRGLCGAIHSSVAKQMKSEAANLAAAGKEVKIIGVGDKIRSILHRTHSDQFLVTFKEVGRRPPTFGDASVIALELLNSGYEFDEGSIIFNRFRSVISYKTEEKPIFSLDTISSAESMSIYDDIDADVLRNYQEYSLANIIYYSLKESTTSEQSARMTAMDNASKNASEMIDKLTLTFNRTRQAVITKELIEIISGAAALD.

The transit peptide at Met-1–Met-25 directs the protein to the mitochondrion. Lys-39 carries the post-translational modification N6-acetyllysine. The residue at position 49 (Lys-49) is an N6-succinyllysine. Lys-55 carries the N6-acetyllysine modification. N6-acetyllysine; alternate is present on Lys-115. Lys-115 is modified (N6-succinyllysine; alternate). Ser-146 carries the post-translational modification Phosphoserine. The residue at position 154 (Lys-154) is an N6-acetyllysine; alternate. Position 154 is an N6-succinyllysine; alternate (Lys-154). Lys-197 is modified (N6-acetyllysine). Position 270 is an N6-succinyllysine (Lys-270).

It belongs to the ATPase gamma chain family. Component of the ATP synthase complex composed at least of ATP5F1A/subunit alpha, ATP5F1B/subunit beta, ATP5MC1/subunit c (homooctomer), MT-ATP6/subunit a, MT-ATP8/subunit 8, ATP5ME/subunit e, ATP5MF/subunit f, ATP5MG/subunit g, ATP5MK/subunit k, ATP5MJ/subunit j, ATP5F1C/subunit gamma, ATP5F1D/subunit delta, ATP5F1E/subunit epsilon, ATP5PF/subunit F6, ATP5PB/subunit b, ATP5PD/subunit d, ATP5PO/subunit OSCP. ATP synthase complex consists of a soluble F(1) head domain (subunits alpha(3) and beta(3)) - the catalytic core - and a membrane F(0) domain - the membrane proton channel (subunits c, a, 8, e, f, g, k and j). These two domains are linked by a central stalk (subunits gamma, delta, and epsilon) rotating inside the F1 region and a stationary peripheral stalk (subunits F6, b, d, and OSCP). Interacts with FLVCR2; this interaction occurs in the absence of heme and is disrupted upon heme binding.

Its subcellular location is the mitochondrion inner membrane. Functionally, subunit gamma, of the mitochondrial membrane ATP synthase complex (F(1)F(0) ATP synthase or Complex V) that produces ATP from ADP in the presence of a proton gradient across the membrane which is generated by electron transport complexes of the respiratory chain. ATP synthase complex consist of a soluble F(1) head domain - the catalytic core - and a membrane F(1) domain - the membrane proton channel. These two domains are linked by a central stalk rotating inside the F(1) region and a stationary peripheral stalk. During catalysis, ATP synthesis in the catalytic domain of F(1) is coupled via a rotary mechanism of the central stalk subunits to proton translocation. In vivo, can only synthesize ATP although its ATP hydrolase activity can be activated artificially in vitro. With the central stalk subunit delta, is essential for the biogenesis of F(1) catalytic part of the ATP synthase complex namely in the formation of F1 assembly intermediate. The sequence is that of ATP synthase F(1) complex subunit gamma, mitochondrial from Bos taurus (Bovine).